A 328-amino-acid polypeptide reads, in one-letter code: MKAPVRVAVTGAAGQIGYALLFRIASGEMLGKDQPVILQLLELPVDKAQAALKGVMMELEDCAFPLLAGMVGTDDAEVAFKDADIALLVGARPRGPGMERKDLLLENAKIFTAQGAALNKVASRDVKVLVVGNPANTNAYIAMKSAPDLKPENFTAMLRLDHNRALSQLSTKLGKPVGGMEKLVVWGNHSPTMYPDYRFATADGASIADAINDQEWNANTFIPTVGKRGAAIIEARGSSSAASAANAAIDHVRDWVLGSNGKWVTMGVPSDGSYGIPEGVIFGFAVTTENGKYTLVKDLPIDDFSQKYIDKTLAELEEERAGVAHLLG.

11-17 contributes to the NAD(+) binding site; the sequence is GAAGQIG. The substrate site is built by Arg-94 and Arg-100. NAD(+) is bound by residues Asn-107, Gln-114, and 131-133; that span reads VGN. Asn-133 and Arg-164 together coordinate substrate. His-189 serves as the catalytic Proton acceptor.

This sequence belongs to the LDH/MDH superfamily. MDH type 2 family.

It carries out the reaction (S)-malate + NAD(+) = oxaloacetate + NADH + H(+). In terms of biological role, catalyzes the reversible oxidation of malate to oxaloacetate. The polypeptide is Malate dehydrogenase (Stenotrophomonas maltophilia (strain K279a)).